The following is a 467-amino-acid chain: Cysteine--tRNA ligase (467 aa).

Zn(2+) is bound at residue Cys-29. A 'HIGH' region motif is present at residues 31–41; it reads PTVYNYVHIGN. Residues Cys-209, His-234, and Glu-238 each contribute to the Zn(2+) site. The 'KMSKS' region motif lies at 267–271; sequence KMSKS. Lys-270 is an ATP binding site.

It belongs to the class-I aminoacyl-tRNA synthetase family. As to quaternary structure, monomer. Requires Zn(2+) as cofactor.

It localises to the cytoplasm. It carries out the reaction tRNA(Cys) + L-cysteine + ATP = L-cysteinyl-tRNA(Cys) + AMP + diphosphate. In Xylella fastidiosa (strain 9a5c), this protein is Cysteine--tRNA ligase.